Reading from the N-terminus, the 681-residue chain is Cadmium, zinc and cobalt-transporting ATPase (681 aa).

The 66-residue stretch at 1 to 66 (MQKYHFTGLD…LEPDMELSEQ (66 aa)) folds into the HMA domain. Topologically, residues 1–72 (MQKYHFTGLD…LSEQVQSEAK (72 aa)) are cytoplasmic. Positions 11 and 14 each coordinate Cd(2+). Positions 11 and 14 each coordinate Co(2+). Residues Cys-11 and Cys-14 each contribute to the Zn(2+) site. The chain crosses the membrane as a helical span at residues 73-92 (PSAIPLLLSVVLYLIAVATI). Residues 93–102 (HFSAQNWALH) are Extracellular-facing. A helical membrane pass occupies residues 103–124 (LSYALLAGVYLVAGKDVFLGAL). Over 125-131 (RAIRNKQ) the chain is Cytoplasmic. A helical transmembrane segment spans residues 132 to 151 (FFDENTLMLSATIAAFGVGA). Residues 152–154 (HEE) lie on the Extracellular side of the membrane. Residues 155-174 (AVSIMVFYSAGEFLQQLAIA) form a helical membrane-spanning segment. The Cytoplasmic segment spans residues 175–308 (RSKQSLHALL…ITTFARYYTP (134 aa)). Residues 309–327 (AVFAIALLIALVPPLLGHG) form a helical membrane-spanning segment. Residues 328 to 332 (DFDTW) are Extracellular-facing. A helical transmembrane segment spans residues 333–350 (IYRGLFALMVSCPCALVI). Topologically, residues 351-630 (SVPLGYFGGV…VFKIAKKTKR (280 aa)) are cytoplasmic. Asp-388 acts as the 4-aspartylphosphate intermediate in catalysis. Residues Asp-578 and Asp-582 each contribute to the Mg(2+) site. A helical transmembrane segment spans residues 631 to 652 (IIIENIIFALAIKAMFIVLGLS). The Extracellular portion of the chain corresponds to 653–660 (GDASLWEA). The helical transmembrane segment at 661-676 (VLGDVGVTLIALANSM) threads the bilayer. Over 677 to 681 (RTMRI) the chain is Cytoplasmic.

Belongs to the cation transport ATPase (P-type) (TC 3.A.3) family. Type IB subfamily.

The protein resides in the cell membrane. It catalyses the reaction Zn(2+)(in) + ATP + H2O = Zn(2+)(out) + ADP + phosphate + H(+). The enzyme catalyses Cd(2+)(in) + ATP + H2O = Cd(2+)(out) + ADP + phosphate + H(+). Its function is as follows. Couples the hydrolysis of ATP with the transport of cadmium, zinc and cobalt out of the cell. In Helicobacter felis, this protein is Cadmium, zinc and cobalt-transporting ATPase (cadA).